A 498-amino-acid polypeptide reads, in one-letter code: Probable dipeptidase B (498 aa).

The active site involves C26.

This sequence belongs to the peptidase C69 family.

It catalyses the reaction an L-aminoacyl-L-amino acid + H2O = 2 an L-alpha-amino acid. The polypeptide is Probable dipeptidase B (pepDB) (Streptococcus pyogenes serotype M1).